The following is a 473-amino-acid chain: Cytochrome c-552 (473 aa).

Residues 1–33 (MQHGDEMMKKMTGKSFALSALVAASFMAAGAMA) form the signal peptide. Histidine 93 is a heme c binding site. Cysteine 121, cysteine 124, and lysine 125 together coordinate heme. 6 residues coordinate heme c: cysteine 159, cysteine 162, histidine 163, cysteine 201, cysteine 204, and histidine 205. Ca(2+)-binding residues include glutamate 207, tyrosine 208, lysine 256, and glutamine 258. Tyrosine 208 is a binding site for substrate. Histidine 259 contacts substrate. Heme c contacts are provided by histidine 270, cysteine 277, cysteine 280, histidine 281, histidine 296, cysteine 309, cysteine 312, histidine 313, and histidine 388.

This sequence belongs to the cytochrome c-552 family. Ca(2+) serves as cofactor. The cofactor is heme c.

Its subcellular location is the periplasm. The catalysed reaction is 6 Fe(III)-[cytochrome c] + NH4(+) + 2 H2O = 6 Fe(II)-[cytochrome c] + nitrite + 8 H(+). The protein operates within nitrogen metabolism; nitrate reduction (assimilation). Its function is as follows. Catalyzes the reduction of nitrite to ammonia, consuming six electrons in the process. This Shewanella sp. (strain ANA-3) protein is Cytochrome c-552.